The chain runs to 98 residues: Integration host factor subunit alpha (98 aa).

The disordered stretch occupies residues 52 to 73 (FDLRQKSERPGRNPKTGEDIPI). Basic and acidic residues predominate over residues 54–73 (LRQKSERPGRNPKTGEDIPI).

This sequence belongs to the bacterial histone-like protein family. As to quaternary structure, heterodimer of an alpha and a beta chain.

This protein is one of the two subunits of integration host factor, a specific DNA-binding protein that functions in genetic recombination as well as in transcriptional and translational control. The polypeptide is Integration host factor subunit alpha (Pseudoalteromonas atlantica (strain T6c / ATCC BAA-1087)).